A 267-amino-acid chain; its full sequence is Thiamine thiazole synthase (267 aa).

NAD(+) contacts are provided by residues Ser-41, 60–61 (ER), Gly-68, Val-132, and 160–162 (HVD). Asp-162 and His-177 together coordinate Fe cation. Met-227 contacts NAD(+). Arg-237 contributes to the glycine binding site.

It belongs to the THI4 family. Homooctamer; tetramer of dimers. The cofactor is Fe(2+).

The enzyme catalyses hydrogen sulfide + glycine + NAD(+) = ADP-5-ethyl-4-methylthiazole-2-carboxylate + nicotinamide + 3 H2O + H(+). Its pathway is cofactor biosynthesis; thiamine diphosphate biosynthesis. Functionally, involved in the biosynthesis of the thiazole moiety of thiamine. Catalyzes the conversion of NAD and glycine to adenosine diphosphate 5-(2-hydroxyethyl)-4-methylthiazole-2-carboxylate (ADT), an adenylated thiazole intermediate, using free sulfide as a source of sulfur. This is Thiamine thiazole synthase from Saccharolobus islandicus (strain Y.N.15.51 / Yellowstone #2) (Sulfolobus islandicus).